The following is a 429-amino-acid chain: Adenylosuccinate synthetase (429 aa).

Residues 12-18 (GDEGKGK) and 40-42 (GHT) contribute to the GTP site. Aspartate 13 functions as the Proton acceptor in the catalytic mechanism. Residues aspartate 13 and glycine 40 each contribute to the Mg(2+) site. Residues 13-16 (DEGK), 38-41 (NAGH), threonine 129, arginine 143, glutamine 224, threonine 239, and arginine 303 each bind IMP. Catalysis depends on histidine 41, which acts as the Proton donor. 299–305 (ATTGRKR) contacts substrate. GTP contacts are provided by residues arginine 305, 331–333 (KLD), and 413–415 (SVG).

It belongs to the adenylosuccinate synthetase family. Homodimer. The cofactor is Mg(2+).

The protein localises to the cytoplasm. The enzyme catalyses IMP + L-aspartate + GTP = N(6)-(1,2-dicarboxyethyl)-AMP + GDP + phosphate + 2 H(+). Its pathway is purine metabolism; AMP biosynthesis via de novo pathway; AMP from IMP: step 1/2. Plays an important role in the de novo pathway of purine nucleotide biosynthesis. Catalyzes the first committed step in the biosynthesis of AMP from IMP. This is Adenylosuccinate synthetase from Desulfosudis oleivorans (strain DSM 6200 / JCM 39069 / Hxd3) (Desulfococcus oleovorans).